We begin with the raw amino-acid sequence, 411 residues long: Metal-binding regulatory protein cuf1 (411 aa).

The segment at residues 1-40 (MVVINNVKMACMKCIRGHRSSTCKHNDRELFPIRPKGRPI) is a DNA-binding region (copper-fist). Residues Cys-11, Cys-14, Cys-23, and His-25 each coordinate Zn(2+). The disordered stretch occupies residues 63-92 (SRKKGSKCSTSSTTDLDSSSASNSSCSIPS). Positions 69 to 92 (KCSTSSTTDLDSSSASNSSCSIPS) are enriched in low complexity.

The protein localises to the cytoplasm. It is found in the nucleus. Functionally, copper-sensing transcription factor that regulates iron uptake genes. Under copper starvation conditions activates the transcription of the copper transport genes, ctr4, ctr5 and ctr6. The sequence is that of Metal-binding regulatory protein cuf1 (cuf1) from Schizosaccharomyces pombe (strain 972 / ATCC 24843) (Fission yeast).